The sequence spans 373 residues: Probable G-protein coupled receptor 45 (373 aa).

Topologically, residues 1–38 (MACNSTPMGTYEHLLLNVSNTLDPGDTPLSAPLRISLA) are extracellular. The N-linked (GlcNAc...) asparagine glycan is linked to Asn17. A helical transmembrane segment spans residues 39-59 (IMMLLMIVVGFLGNTVVCIIV). Over 60–75 (YQRPAMRSAINLLLAT) the chain is Cytoplasmic. A helical transmembrane segment spans residues 76 to 96 (LAFSDIMLSLCCMPFTAITLI). Over 97-109 (TVRWHFGDHFCRL) the chain is Extracellular. A helical transmembrane segment spans residues 110-130 (SATLYWFFVLEGVAILLIISV). Topologically, residues 131–149 (DRFLIIVQRQDKLNPRRAK) are cytoplasmic. The helical transmembrane segment at 150–170 (MIIAASWVLSFCISAPSFTGW) threads the bilayer. At 171 to 198 (TFMEVPARAPQCVLGYTEFPAERAYVVT) the chain is on the extracellular side. The helical transmembrane segment at 199-219 (LVVAVFFAPFGVMLCSYLCIL) threads the bilayer. Residues 220 to 269 (NTVRKNAVRVHNQSDSLDLRQLTGAGLRRLRRQQQQASLDLSFKTKAFTT) lie on the Cytoplasmic side of the membrane. The helical transmembrane segment at 270–290 (ILILFVGFSLCWLPHSVYSLL) threads the bilayer. Over 291–306 (SAFSRRFYYSASFYTT) the chain is Extracellular. The chain crosses the membrane as a helical span at residues 307-327 (STCVLWLSYLKSVFNPIVYCW). Topologically, residues 328–373 (RIKKFREACIELLPHTFQILPKVPERIQRKIQPSTIYVCNENQSAV) are cytoplasmic.

This sequence belongs to the G-protein coupled receptor 1 family. Brain specific.

It is found in the cell membrane. Functionally, orphan receptor. May play a role in brain function. The sequence is that of Probable G-protein coupled receptor 45 (Gpr45) from Mus musculus (Mouse).